A 156-amino-acid polypeptide reads, in one-letter code: Transcriptional repressor NrdR (156 aa).

A zinc finger lies at 3–34 (CPFCGNVDTQVKDSRPAEDHVAIRRRRFCPAC). The 91-residue stretch at 49-139 (LVVIKSNGKR…VYKNFQATGD (91 aa)) folds into the ATP-cone domain.

It belongs to the NrdR family. The cofactor is Zn(2+).

Its function is as follows. Negatively regulates transcription of bacterial ribonucleotide reductase nrd genes and operons by binding to NrdR-boxes. This chain is Transcriptional repressor NrdR, found in Jannaschia sp. (strain CCS1).